A 399-amino-acid chain; its full sequence is UDP-galactopyranose mutase (399 aa).

Phe18, Glu38, Asn46, and Leu66 together coordinate FAD. 4 residues coordinate UDP-alpha-D-galactose: Phe157, Thr162, Trp166, and Tyr191. Position 224 to 225 (224 to 225 (DW)) interacts with FAD. UDP-alpha-D-galactose-binding residues include Asn282, Arg292, and Tyr328. Position 360 (Arg360) interacts with FAD. Tyr366 contacts UDP-alpha-D-galactose. 367–369 (LDM) provides a ligand contact to FAD.

This sequence belongs to the UDP-galactopyranose/dTDP-fucopyranose mutase family. As to quaternary structure, homotetramer. FAD serves as cofactor.

The enzyme catalyses UDP-alpha-D-galactose = UDP-alpha-D-galactofuranose. It functions in the pathway cell wall biogenesis; cell wall polysaccharide biosynthesis. In terms of biological role, catalyzes the interconversion through a 2-keto intermediate of uridine diphosphogalactopyranose (UDP-GalP) into uridine diphosphogalactofuranose (UDP-GalF) which is a key building block for cell wall construction in Mycobacterium tuberculosis. The polypeptide is UDP-galactopyranose mutase (glf) (Mycobacterium tuberculosis (strain CDC 1551 / Oshkosh)).